The chain runs to 163 residues: Steroid receptor-associated and regulated protein (163 aa).

A compositionally biased stretch (basic and acidic residues) spans 1–16 (MAFSKDPRRTSLRDSS). 2 disordered regions span residues 1–30 (MAFSKDPRRTSLRDSSVEMSSGTQPSCAPK) and 96–149 (ALDG…EKVK). Over residues 17–26 (VEMSSGTQPS) the composition is skewed to polar residues.

As to quaternary structure, interacts with 14-3-3 proteins.

In terms of biological role, may regulate the transcriptional function of androgen and estrogen receptors. The polypeptide is Steroid receptor-associated and regulated protein (Mus musculus (Mouse)).